The following is a 284-amino-acid chain: 2-dehydro-3-deoxyphosphooctonate aldolase (284 aa).

Belongs to the KdsA family.

The protein localises to the cytoplasm. The enzyme catalyses D-arabinose 5-phosphate + phosphoenolpyruvate + H2O = 3-deoxy-alpha-D-manno-2-octulosonate-8-phosphate + phosphate. Its pathway is carbohydrate biosynthesis; 3-deoxy-D-manno-octulosonate biosynthesis; 3-deoxy-D-manno-octulosonate from D-ribulose 5-phosphate: step 2/3. It participates in bacterial outer membrane biogenesis; lipopolysaccharide biosynthesis. The protein is 2-dehydro-3-deoxyphosphooctonate aldolase (kdsA) of Haemophilus influenzae (strain ATCC 51907 / DSM 11121 / KW20 / Rd).